We begin with the raw amino-acid sequence, 1733 residues long: MVGQQYSSAPLRTVKEVQFGLFSPEEVRAISVAKIRFPETMDETQTRAKIGGLNDPRLGSIDRNLKCQTCQEGMNECPGHFGHIDLAKPVFHVGFIAKIKKVCECVCMHCGKLLLDEHNELMRQALAIKDSKKRFAAIWTLCKTKMVCETDVPSEDDPTQLVSRGGCGNTQPTIRKDGLKLVGSWKKDRATGDADEPELRVLSTEEILNIFKHISVKDFTSLGFNEVFSRPEWMILTCLPVPPPPVRPSISFNESQRGEDDLTFKLADILKANISLETLEHNGAPHHAIEEAESLLQFHVATYMDNDIAGQPQALQKSGRPVKSIRARLKGKEGRIRGNLMGKRVDFSARTVISGDPNLELDQVGVPKSIAKTLTYPEVVTPYNIDRLTQLVRNGPNEHPGAKYVIRDSGDRIDLRYSKRAGDIQLQYGWKVERHIMDNDPVLFNRQPSLHKMSMMAHRVKVIPYSTFRLNLSVTSPYNADFDGDEMNLHVPQSEETRAELSQLCAVPLQIVSPQSNKPCMGIVQDTLCGIRKLTLRDTFIELDQVLNMLYWVPDWDGVIPTPAIIKPKPLWSGKQILSVAIPNGIHLQRFDEGTTLLSPKDNGMLIIDGQIIFGVVEKKTVGSSNGGLIHVVTREKGPQVCAKLFGNIQKVVNFWLLHNGFSTGIGDTIADGPTMREITETIAEAKKKVLDVTKEAQANLLTAKHGMTLRESFEDNVVRFLNEARDKAGRLAEVNLKDLNNVKQMVMAGSKGSFINIAQMSACVGQQSVEGKRIAFGFVDRTLPHFSKDDYSPESKGFVENSYLRGLTPQEFFFHAMGGREGLIDTAVKTAETGYIQRRLVKALEDIMVHYDNTTRNSLGNVIQFIYGEDGMDAAHIEKQSLDTIGGSDAAFEKRYRVDLLNTDHTLDPSLLESGSEILGDLKLQVLLDEEYKQLVKDRKFLREVFVDGEANWPLPVNIRRIIQNAQQTFHIDHTKPSDLTIKDIVLGVKDLQENLLVLRGKNEIIQNAQRDAVTLFCCLLRSRLATRRVLQEYRLTKQAFDWVLSNIEAQFLRSVVHPGEMVGVLAAQSIGEPATQMTLNTFHFAGVASKKVTSGVPRLKEILNVAKNMKTPSLTVYLEPGHAADQEQAKLIRSAIEHTTLKSVTIASEIYYDPDPRSTVIPEDEEIIQLHFSLLDEEAEQSFDQQSPWLLRLELDRAAMNDKDLTMGQVGERIKQTFKNDLFVIWSEDNDEKLIIRCRVVRPKSLDAETEAEEDHMLKKIENTMLENITLRGVENIERVVMMKYDRKVPSPTGEYVKEPEWVLETDGVNLSEVMTVPGIDPTRIYTNSFIDIMEVLGIEAGRAALYKEVYNVIASDGSYVNYRHMALLVDVMTTQGGLTSVTRHGFNRSNTGALMRCSFEETVEILFEAGASAELDDCRGVSENVILGQMAPIGTGAFDVMIDEESLVKYMPEQKITEIEDGQDGGVTPYSNESGLVNADLDVKDELMFSPLVDSGSNDAMAGGFTAYGGADYGEATSPFGAYGEAPTSPGFGVSSPGFSPTSPTYSPTSPAYSPTSPSYSPTSPSYSPTSPSYSPTSPSYSPTSPSYSPTSPSYSPTSPSYSPTSPSYSPTSPSYSPTSPSYSPTSPSYSPTSPSYSPTSPSYSPTSPSYSPTSPAYSPTSPSYSPTSPSYSPTSPSYSPTSPSYSPTSPNYSPTSPSYSPTSPGYSPGSPAYSPKQDEQKHNENENSR.

Zn(2+) is bound by residues cysteine 67, cysteine 70, cysteine 77, histidine 80, cysteine 107, cysteine 110, cysteine 148, and cysteine 167. The lid loop stretch occupies residues 248-260 (PSISFNESQRGED). Residues 306–323 (NDIAGQPQALQKSGRPVK) form a rudder loop region. Residues aspartate 481, aspartate 483, and aspartate 485 each coordinate Mg(2+). Lysine 695 participates in a covalent cross-link: Glycyl lysine isopeptide (Lys-Gly) (interchain with G-Cter in ubiquitin). The segment at 810–822 (PQEFFFHAMGGRE) is bridging helix. Glycyl lysine isopeptide (Lys-Gly) (interchain with G-Cter in ubiquitin) cross-links involve residues lysine 1246 and lysine 1350. Phosphothreonine is present on threonine 1471. The interval 1537-1733 (VSSPGFSPTS…QKHNENENSR (197 aa)) is disordered. Positions 1538–1719 (SSPGFSPTSP…YSPGSPAYSP (182 aa)) are enriched in low complexity. A run of 23 repeats spans residues 1549 to 1555 (YSPTSPA), 1556 to 1562 (YSPTSPS), 1563 to 1569 (YSPTSPS), 1570 to 1576 (YSPTSPS), 1577 to 1583 (YSPTSPS), 1584 to 1590 (YSPTSPS), 1591 to 1597 (YSPTSPS), 1598 to 1604 (YSPTSPS), 1605 to 1611 (YSPTSPS), 1612 to 1618 (YSPTSPS), 1619 to 1625 (YSPTSPS), 1626 to 1632 (YSPTSPS), 1633 to 1639 (YSPTSPS), 1640 to 1646 (YSPTSPS), 1647 to 1653 (YSPTSPS), 1654 to 1660 (YSPTSPA), 1661 to 1667 (YSPTSPS), 1668 to 1674 (YSPTSPS), 1675 to 1681 (YSPTSPS), 1682 to 1688 (YSPTSPS), 1689 to 1695 (YSPTSPN), 1696 to 1702 (YSPTSPS), and 1703 to 1709 (YSPTSPG). The segment at 1549-1716 (YSPTSPAYSP…SPGYSPGSPA (168 aa)) is C-terminal domain (CTD); 24 X 7 AA approximate tandem repeats of Y-S-P-T-S-P-[A-S-N-G]. The 24; approximate repeat unit spans residues 1710-1716 (YSPGSPA). Residues 1720–1733 (KQDEQKHNENENSR) are compositionally biased toward basic and acidic residues.

Belongs to the RNA polymerase beta' chain family. As to quaternary structure, component of the RNA polymerase II (Pol II) complex consisting of 12 subunits. Interacts with DEF1; the interaction is direct and serves to bridge RPB1 to the Elongin complex in a DNA-damaged dependent manner. Interacts with the Elongin subunit ELA1. Interacts with the Elongin subunit ELC1. Interacts with ASK10. Interacts with ESS1. Interacts with RTT103. Interacts with SHE2. Post-translationally, the tandem 7 residues repeats in the C-terminal domain (CTD) can be highly phosphorylated. The phosphorylation activates Pol II. Phosphorylation occurs mainly at residues 'Ser-2' and 'Ser-5' of the heptapeptide repeat. The phosphorylated form of Pol II appears to carry, on average, one phosphate per repeat. The phosphorylation state is believed to result from the balanced action of site-specific CTD kinases and phosphatases, and a 'CTD code' that specifies the position of Pol II within the transcription cycle has been proposed. Phosphorylation at 'Ser-5' occurs in promoter-proximal regions in early elongation. Phosphorylation at 'Ser-2' predominates in regions more distal to the promoter and triggers binding of the 3' RNA processing machinery. CTD kinases include KIN28 (as part of the TFKII complex, a subcomplex of the TFIIH holo complex), SSN3/SRB10 (as part of the SRB8-11 complex, a module of the Mediator complex), CTK1 (as part of CTD kinase), and probably BUR1 (as part of the BUR1-BUR2 kinase complex). Phosphatases include FCP1 and SSU72. Following transcription stress, the elongating form of RNA polymerase II (RNA pol IIo) is polyubiquitinated via 'Lys-63'-linkages on Lys-1246 by the RSP5-UBA1-UBC5 complex at DNA damage sites without leading to degradation: ubiquitination promotes RNA pol IIo backtracking to allow access by the transcription-coupled nucleotide excision repair (TC-NER) machinery. Subsequent DEF1-dependent polyubiquitination by the elongin complex via 'Lys-48'-linkages may lead to proteasome-mediated degradation; presumably at stalled RNA pol II where TC-NER has failed, to halt global transcription and enable 'last resort' DNA repair pathways.

The protein localises to the nucleus. The catalysed reaction is RNA(n) + a ribonucleoside 5'-triphosphate = RNA(n+1) + diphosphate. DNA-dependent RNA polymerase catalyzes the transcription of DNA into RNA using the four ribonucleoside triphosphates as substrates. Largest and catalytic component of RNA polymerase II which synthesizes mRNA precursors and many functional non-coding RNAs. Forms the polymerase active center together with the second largest subunit. Pol II is the central component of the basal RNA polymerase II transcription machinery. During a transcription cycle, Pol II, general transcription factors and the Mediator complex assemble as the preinitiation complex (PIC) at the promoter. 11-15 base pairs of DNA surrounding the transcription start site are melted and the single-stranded DNA template strand of the promoter is positioned deeply within the central active site cleft of Pol II to form the open complex. After synthesis of about 30 bases of RNA, Pol II releases its contacts with the core promoter and the rest of the transcription machinery (promoter clearance) and enters the stage of transcription elongation in which it moves on the template as the transcript elongates. Pol II appears to oscillate between inactive and active conformations at each step of nucleotide addition. Elongation is influenced by the phosphorylation status of the C-terminal domain (CTD) of Pol II largest subunit (RPB1), which serves as a platform for assembly of factors that regulate transcription initiation, elongation, termination and mRNA processing. Pol II is composed of mobile elements that move relative to each other. The core element with the central large cleft comprises RPB3, RBP10, RPB11, RPB12 and regions of RPB1 and RPB2 forming the active center. The clamp element (portions of RPB1, RPB2 and RPB3) is connected to the core through a set of flexible switches and moves to open and close the cleft. A bridging helix emanates from RPB1 and crosses the cleft near the catalytic site and is thought to promote translocation of Pol II by acting as a ratchet that moves the RNA-DNA hybrid through the active site by switching from straight to bent conformations at each step of nucleotide addition. In elongating Pol II, the lid loop (RPB1) appears to act as a wedge to drive apart the DNA and RNA strands at the upstream end of the transcription bubble and guide the RNA strand toward the RNA exit groove located near the base of the largely unstructured CTD domain of RPB1. The rudder loop (RPB1) interacts with single-stranded DNA after separation from the RNA strand, likely preventing reassociation with the exiting RNA. The cleft is surrounded by jaws: an upper jaw formed by portions of RBP1, RPB2 and RPB9, and a lower jaw, formed by RPB5 and portions of RBP1. The jaws are thought to grab the incoming DNA template, mainly by RPB5 direct contacts to DNA. The sequence is that of DNA-directed RNA polymerase II subunit RPB1 (RPO21) from Saccharomyces cerevisiae (strain ATCC 204508 / S288c) (Baker's yeast).